A 72-amino-acid polypeptide reads, in one-letter code: MTNEPSTSTPTSTSTSTSTSTSTSTTTLTSTSSTPTSTSTSTSTSTSTSTSTSTSLIYRGTIITITTFITII.

The disordered stretch occupies residues 1-53 (MTNEPSTSTPTSTSTSTSTSTSTSTTTLTSTSSTPTSTSTSTSTSTSTSTSTS).

This is an uncharacterized protein from Dictyostelium discoideum (Social amoeba).